An 87-amino-acid chain; its full sequence is Defensin alpha-like protein 1 (87 aa).

A signal peptide spans 1-19 (MKTLILLSALVLLALQVQA). A propeptide spanning residues 20-56 (DPIQEAEEETKTEEQPADEDQDVSVSFEGPEASAVQD) is cleaved from the precursor. Over residues 23 to 41 (QEAEEETKTEEQPADEDQD) the composition is skewed to acidic residues. Positions 23–43 (QEAEEETKTEEQPADEDQDVS) are disordered.

This sequence belongs to the alpha-defensin family. As to quaternary structure, antiparallel homodimer; disulfide-linked. Specifically expressed in small intestine (jejunum and ileum). Probably expressed by Paneth cells at the base of intestinal crypts. Coexpressed with MMP7 in small intestine.

Its subcellular location is the secreted. Intestinal defense peptide. Has potent antibacterial activity against Gram-negative bacteria E.coli O157:H7, S.typhimurium DT104, and K.pneumoniae; and against Gram-positive bacteria S.aureus, methicillin-resistant S.aureus and L.monocytogenes. Remains active in the presence of NaCl and Mg(2+). Probably functions by disrupting bacterial membrane integrity. However, does not show cytotoxic activity towards human intestinal cells. The polypeptide is Defensin alpha-like protein 1 (Rattus norvegicus (Rat)).